Reading from the N-terminus, the 863-residue chain is Leucine--tRNA ligase (863 aa).

Residues 40-51 carry the 'HIGH' region motif; it reads PYPSGAGLHVGH. The 'KMSKS' region motif lies at 635-639; that stretch reads KMSKS. Residue K638 coordinates ATP.

It belongs to the class-I aminoacyl-tRNA synthetase family.

Its subcellular location is the cytoplasm. It catalyses the reaction tRNA(Leu) + L-leucine + ATP = L-leucyl-tRNA(Leu) + AMP + diphosphate. The chain is Leucine--tRNA ligase from Leptospira interrogans serogroup Icterohaemorrhagiae serovar copenhageni (strain Fiocruz L1-130).